A 575-amino-acid chain; its full sequence is Alpha-(1,6)-fucosyltransferase (575 aa).

Residues 1–9 (MRPWTGSWR) are Cytoplasmic-facing. Residues 10–30 (WIMLILFAWGTLLFYIGGHLV) traverse the membrane as a helical; Signal-anchor for type II membrane protein segment. Residues 31–575 (RDNDHPDHSS…KYPTYPEAEK (545 aa)) lie on the Lumenal side of the membrane. Cystine bridges form between Cys-204-Cys-266, Cys-212-Cys-230, and Cys-218-Cys-222. Positions 206–493 (KAKKLVCNIN…PDASANFHSL (288 aa)) constitute a GT23 domain. The residue at position 278 (Ser-278) is a Phosphoserine. Residues 299-305 (PRPPYLP) carry the SH3-binding motif. The interval 365–366 (RR) is important for donor substrate binding. Cys-465 and Cys-472 form a disulfide bridge. Residues 502–563 (QNAHNQIAIY…PSYKVREKIE (62 aa)) form the SH3 domain.

It belongs to the glycosyltransferase 23 family. Tyrosine phosphorylated by PKDCC/VLK.

The protein resides in the golgi apparatus. Its subcellular location is the golgi stack membrane. It catalyses the reaction N(4)-{beta-D-GlcNAc-(1-&gt;2)-alpha-D-Man-(1-&gt;3)-[beta-D-GlcNAc-(1-&gt;2)-alpha-D-Man-(1-&gt;6)]-beta-D-Man-(1-&gt;4)-beta-D-GlcNAc-(1-&gt;4)-beta-D-GlcNAc}-L-asparaginyl-[protein] + GDP-beta-L-fucose = an N(4)-{beta-D-GlcNAc-(1-&gt;2)-alpha-D-Man-(1-&gt;3)-[beta-D-GlcNAc-(1-&gt;2)-alpha-D-Man-(1-&gt;6)]-beta-D-Man-(1-&gt;4)-beta-D-GlcNAc-(1-&gt;4)-[alpha-L-Fuc-(1-&gt;6)]-beta-D-GlcNAc}-L-asparaginyl-[protein] + GDP + H(+). It functions in the pathway protein modification; protein glycosylation. In terms of biological role, catalyzes the addition of fucose in alpha 1-6 linkage to the first GlcNAc residue, next to the peptide chains in N-glycans. This Homo sapiens (Human) protein is Alpha-(1,6)-fucosyltransferase (FUT8).